The following is a 155-amino-acid chain: Ribosomal RNA large subunit methyltransferase H (155 aa).

S-adenosyl-L-methionine is bound by residues Leu-73, Gly-104, and 123–128; that span reads LSALTL.

This sequence belongs to the RNA methyltransferase RlmH family. Homodimer.

The protein localises to the cytoplasm. The catalysed reaction is pseudouridine(1915) in 23S rRNA + S-adenosyl-L-methionine = N(3)-methylpseudouridine(1915) in 23S rRNA + S-adenosyl-L-homocysteine + H(+). In terms of biological role, specifically methylates the pseudouridine at position 1915 (m3Psi1915) in 23S rRNA. This is Ribosomal RNA large subunit methyltransferase H from Coxiella burnetii (strain Dugway 5J108-111).